The chain runs to 421 residues: Enolase (421 aa).

Gln-162 lines the (2R)-2-phosphoglycerate pocket. The active-site Proton donor is the Glu-204. Mg(2+)-binding residues include Asp-241, Glu-284, and Asp-311. Positions 336, 365, 366, and 387 each coordinate (2R)-2-phosphoglycerate. Lys-336 serves as the catalytic Proton acceptor.

This sequence belongs to the enolase family. Mg(2+) serves as cofactor.

The protein localises to the cytoplasm. It localises to the secreted. Its subcellular location is the cell surface. The enzyme catalyses (2R)-2-phosphoglycerate = phosphoenolpyruvate + H2O. It participates in carbohydrate degradation; glycolysis; pyruvate from D-glyceraldehyde 3-phosphate: step 4/5. In terms of biological role, catalyzes the reversible conversion of 2-phosphoglycerate (2-PG) into phosphoenolpyruvate (PEP). It is essential for the degradation of carbohydrates via glycolysis. The polypeptide is Enolase (Nautilia profundicola (strain ATCC BAA-1463 / DSM 18972 / AmH)).